Reading from the N-terminus, the 338-residue chain is Holliday junction branch migration complex subunit RuvB (338 aa).

Residues 1–182 (MDDRMVDQSQ…FGVHLRLEYY (182 aa)) are large ATPase domain (RuvB-L). ATP is bound by residues L21, R22, G63, K66, T67, T68, 129 to 131 (EDF), R172, Y182, and R219. T67 is a Mg(2+) binding site. Positions 183–253 (KESELKDIII…TTKRALQLLQ (71 aa)) are small ATPAse domain (RuvB-S). The segment at 256 to 338 (DYGLDYIDHK…KNGKRDNFEY (83 aa)) is head domain (RuvB-H). The DNA site is built by R292, R311, and R316.

The protein belongs to the RuvB family. Homohexamer. Forms an RuvA(8)-RuvB(12)-Holliday junction (HJ) complex. HJ DNA is sandwiched between 2 RuvA tetramers; dsDNA enters through RuvA and exits via RuvB. An RuvB hexamer assembles on each DNA strand where it exits the tetramer. Each RuvB hexamer is contacted by two RuvA subunits (via domain III) on 2 adjacent RuvB subunits; this complex drives branch migration. In the full resolvosome a probable DNA-RuvA(4)-RuvB(12)-RuvC(2) complex forms which resolves the HJ.

Its subcellular location is the cytoplasm. The enzyme catalyses ATP + H2O = ADP + phosphate + H(+). Its function is as follows. The RuvA-RuvB-RuvC complex processes Holliday junction (HJ) DNA during genetic recombination and DNA repair, while the RuvA-RuvB complex plays an important role in the rescue of blocked DNA replication forks via replication fork reversal (RFR). RuvA specifically binds to HJ cruciform DNA, conferring on it an open structure. The RuvB hexamer acts as an ATP-dependent pump, pulling dsDNA into and through the RuvAB complex. RuvB forms 2 homohexamers on either side of HJ DNA bound by 1 or 2 RuvA tetramers; 4 subunits per hexamer contact DNA at a time. Coordinated motions by a converter formed by DNA-disengaged RuvB subunits stimulates ATP hydrolysis and nucleotide exchange. Immobilization of the converter enables RuvB to convert the ATP-contained energy into a lever motion, pulling 2 nucleotides of DNA out of the RuvA tetramer per ATP hydrolyzed, thus driving DNA branch migration. The RuvB motors rotate together with the DNA substrate, which together with the progressing nucleotide cycle form the mechanistic basis for DNA recombination by continuous HJ branch migration. Branch migration allows RuvC to scan DNA until it finds its consensus sequence, where it cleaves and resolves cruciform DNA. The protein is Holliday junction branch migration complex subunit RuvB of Staphylococcus carnosus (strain TM300).